The chain runs to 412 residues: Tryptophan synthase beta chain (412 aa).

Position 105 is an N6-(pyridoxal phosphate)lysine (Lys-105).

The protein belongs to the TrpB family. As to quaternary structure, tetramer of two alpha and two beta chains. Requires pyridoxal 5'-phosphate as cofactor.

It carries out the reaction (1S,2R)-1-C-(indol-3-yl)glycerol 3-phosphate + L-serine = D-glyceraldehyde 3-phosphate + L-tryptophan + H2O. It functions in the pathway amino-acid biosynthesis; L-tryptophan biosynthesis; L-tryptophan from chorismate: step 5/5. The beta subunit is responsible for the synthesis of L-tryptophan from indole and L-serine. This chain is Tryptophan synthase beta chain (trpB), found in Synechocystis sp. (strain ATCC 27184 / PCC 6803 / Kazusa).